We begin with the raw amino-acid sequence, 205 residues long: LexA repressor (205 aa).

The segment at residues 28–48 is a DNA-binding region (H-T-H motif); it reads RAEIAASLGFRSPNAAEEHLK. Active-site for autocatalytic cleavage activity residues include S122 and K159.

Belongs to the peptidase S24 family. As to quaternary structure, homodimer.

It carries out the reaction Hydrolysis of Ala-|-Gly bond in repressor LexA.. Its function is as follows. Represses a number of genes involved in the response to DNA damage (SOS response), including recA and lexA. Binds to the 16 bp palindromic sequence 5'-CTGTATATATATACAG-3'. In the presence of single-stranded DNA, RecA interacts with LexA causing an autocatalytic cleavage which disrupts the DNA-binding part of LexA, leading to derepression of the SOS regulon and eventually DNA repair. In Providencia rettgeri, this protein is LexA repressor.